The primary structure comprises 123 residues: DNA-directed RNA polymerase subunit omega (123 aa).

A disordered region spans residues 67–123 (EESAADSLSLGGFSTADVEAEVGGGPVQPDPGASQERAFDEAADGTAQGSGDPDPTT).

It belongs to the RNA polymerase subunit omega family. As to quaternary structure, the RNAP catalytic core consists of 2 alpha, 1 beta, 1 beta' and 1 omega subunit. When a sigma factor is associated with the core the holoenzyme is formed, which can initiate transcription.

The catalysed reaction is RNA(n) + a ribonucleoside 5'-triphosphate = RNA(n+1) + diphosphate. Functionally, promotes RNA polymerase assembly. Latches the N- and C-terminal regions of the beta' subunit thereby facilitating its interaction with the beta and alpha subunits. This is DNA-directed RNA polymerase subunit omega from Halorhodospira halophila (strain DSM 244 / SL1) (Ectothiorhodospira halophila (strain DSM 244 / SL1)).